The chain runs to 1479 residues: C-type mannose receptor 2 (1479 aa).

Positions 1–30 are cleaved as a signal peptide; sequence MVPIRPALAPWPRHLLRCVLLLGGLRLGHP. Residues 31–1413 are Extracellular-facing; sequence ADSAAALLEP…SAALPESPVA (1383 aa). The Ricin B-type lectin domain maps to 37–190; it reads LLEPDVFLIF…SHGKPCTIPF (154 aa). Cysteine 92 and cysteine 111 are disulfide-bonded. Residues asparagine 101 and asparagine 139 are each glycosylated (N-linked (GlcNAc...) asparagine). A Fibronectin type-II domain is found at 181–229; it reads SHGKPCTIPFKYDNQWFHGCTSTGREDGHLWCATTQDYGKDERWGFCPI. Intrachain disulfides connect cysteine 186–cysteine 212, cysteine 200–cysteine 227, cysteine 265–cysteine 358, and cysteine 334–cysteine 350. Residues 243–359 enclose the C-type lectin 1 domain; sequence LTDSCYQFNF…CSIALPYVCK (117 aa). N-linked (GlcNAc...) asparagine glycosylation is present at asparagine 363. C-type lectin domains are found at residues 388 to 504, 527 to 643, 677 to 808, 831 to 950, 978 to 1106, 1131 to 1242, and 1271 to 1391; these read FQGH…SICK, HSPS…RYIC, KLRH…WICK, FQEA…YICK, FLNK…GFIC, YLNH…GAVC, and FREH…GVVC. 7 disulfides stabilise this stretch: cysteine 409–cysteine 503, cysteine 480–cysteine 495, cysteine 617–cysteine 634, cysteine 703–cysteine 807, cysteine 784–cysteine 799, cysteine 852–cysteine 949, and cysteine 926–cysteine 941. Asparagine 1028 carries an N-linked (GlcNAc...) asparagine glycan. A disulfide bridge connects residues cysteine 1077 and cysteine 1097. A Glycyl lysine isopeptide (Lys-Gly) (interchain with G-Cter in SUMO1) cross-link involves residue lysine 1141. A disulfide bond links cysteine 1219 and cysteine 1233. An N-linked (GlcNAc...) asparagine glycan is attached at asparagine 1348. Cysteine 1367 and cysteine 1382 form a disulfide bridge. Residues 1414–1434 traverse the membrane as a helical segment; it reads LVVVLTAVLLLLALMTAALIL. At 1435 to 1479 the chain is on the cytoplasmic side; sequence YRRRQSAERGSFEGARYSRSSHSGPAEATEKNILVSDMEMNEQQE. Residues 1446-1479 form a disordered region; the sequence is FEGARYSRSSHSGPAEATEKNILVSDMEMNEQQE.

As to quaternary structure, interacts directly with PLAUR/UPAR and PLAU/pro-UPA to form a tri-molecular complex. Interacts with collagen V and with C-terminal region of type I collagen/COL1A1. In terms of processing, phosphorylated. As to expression, highly expressed in heart, lung and kidney, but little or no expression in brain, thymus or adult liver. Expressed at highly endothelialized sites such as those in choroid plexus and kidney glomerulai as well as in chondrocytes in cartilaginous regions of the embryo.

It is found in the membrane. Functionally, may play a role as endocytotic lectin receptor displaying calcium-dependent lectin activity. Internalizes glycosylated ligands from the extracellular space for release in an endosomal compartment via clathrin-mediated endocytosis. May be involved in plasminogen activation system controlling the extracellular level of PLAUR/PLAU, and thus may regulate protease activity at the cell surface. May contribute to cellular uptake, remodeling and degradation of extracellular collagen matrices. May participate in remodeling of extracellular matrix cooperating with the matrix metalloproteinases (MMPs). The sequence is that of C-type mannose receptor 2 (Mrc2) from Mus musculus (Mouse).